Reading from the N-terminus, the 3305-residue chain is Microtubule-actin cross-linking factor 1, isoforms 6/7 (3305 aa).

Disordered regions lie at residues 1-24 (MGKPLSRPDCLRRNPTCLGKGEDE), 108-140 (VQKSAPVPPRRRPNAERKDNVNRRSWKSFMPPN), 152-202 (LSEV…KSVD), 239-272 (AAASGNTDEMQEHRFSSATWPRAMKSSSKGGFSE), 333-381 (EEWE…VAVS), 941-1007 (EPAI…PEWS), and 2865-2896 (SVEPTHAPFMEKSRSGSRKSLNQPTPPPMPIL). The span at 120 to 129 (PNAERKDNVN) shows a compositional bias: basic and acidic residues. EF-hand domains lie at 2958–2993 (HKKSRVMDFFRRIDKDQDGKITRQEFIDGILASKFP) and 2994–3029 (TTKLEMTAVADIFDRDGDGYIDYYEFVAALHPNKDA). Ca(2+) contacts are provided by Asp-2971, Asp-2973, Asp-2975, Lys-2977, Glu-2982, Asp-3007, Asp-3009, Asp-3011, Tyr-3013, and Glu-3018. Residues 3034–3106 (TDADKIEDEV…EFLVKNDPCR (73 aa)) form the GAR domain. Positions 3122 to 3305 (PEGASQGMTP…ASPRTPGPKR (184 aa)) are disordered. Residues 3142 to 3176 (SSRAASPTRSSSSASQSNHSCTSMPSSPATPASGT) are compositionally biased toward low complexity. Residues 3193-3212 (FHSSRTSLAGDTSNSSSPAS) show a composition bias toward polar residues. Low complexity predominate over residues 3227 to 3241 (SRPGSRAGSRAGSRA). The span at 3256 to 3266 (ETQSACSDTSE) shows a compositional bias: polar residues. Over residues 3267–3278 (SSAAGGQGSSRR) the composition is skewed to low complexity.

The protein localises to the cytoplasm. It is found in the cytoskeleton. This Mus musculus (Mouse) protein is Microtubule-actin cross-linking factor 1, isoforms 6/7.